The chain runs to 50 residues: Single-stranded DNA-binding protein (50 aa).

As to quaternary structure, homodimer in the absence of DNA, monomer when binding DNA.

Functionally, binds preferentially to single-stranded DNA and therefore, destabilizes double-stranded DNA. It is involved in DNA replication, repair and recombination. Binds ss-DNA as the replication fork advances and stimulates the replisome processivity and accuracy. This chain is Single-stranded DNA-binding protein (32), found in Enterobacteria phage RB27 (Bacteriophage RB27).